The sequence spans 544 residues: Chaperonin GroEL (544 aa).

ATP-binding positions include 29–32 (TLGP), 86–90 (DGTTT), Gly-413, 478–480 (NAA), and Asp-494.

Belongs to the chaperonin (HSP60) family. As to quaternary structure, forms a cylinder of 14 subunits composed of two heptameric rings stacked back-to-back. Interacts with the co-chaperonin GroES.

It is found in the cytoplasm. It carries out the reaction ATP + H2O + a folded polypeptide = ADP + phosphate + an unfolded polypeptide.. Functionally, together with its co-chaperonin GroES, plays an essential role in assisting protein folding. The GroEL-GroES system forms a nano-cage that allows encapsulation of the non-native substrate proteins and provides a physical environment optimized to promote and accelerate protein folding. The protein is Chaperonin GroEL of Lysinibacillus sphaericus (strain C3-41).